The primary structure comprises 708 residues: RUN and FYVE domain-containing protein 1 (708 aa).

A compositionally biased stretch (basic and acidic residues) spans 1–17 (MADREGGCAAGRGRELE). The interval 1-57 (MADREGGCAAGRGRELEPELEPGPGPGSALEPGEEFEIVDRSQLPGPGDLRSATRPR) is disordered. Positions 139–271 (DADHAPLQQF…LDANLCLKGE (133 aa)) constitute an RUN domain. The stretch at 321-374 (TVGDLQTKIDGLEKTNSKLQEELSAATDRICSLQEEQQQLREQNELIRERSEKS) forms a coiled coil. Phosphotyrosine is present on residues Tyr389 and Tyr400. Residues 405–617 (KQLKEEKKVR…QALQEMGLHL (213 aa)) adopt a coiled-coil conformation. The segment at 493–522 (QVMSSMKQMEERLQHSERARQGAEERSHKL) is disordered. Over residues 500-522 (QMEERLQHSERARQGAEERSHKL) the composition is skewed to basic and acidic residues. The interaction with RAB4 stretch occupies residues 615 to 625 (LHLSQSKLKME). Position 620 is a phosphoserine (Ser620). The segment at 642 to 700 (DDEATHCRQCEKEFSISRRKHHCRNCGHIFCNTCSSNELALPSYPKPVRVCDSCHTLLL) adopts an FYVE-type zinc-finger fold. The Zn(2+) site is built by Cys648, Cys651, Cys664, Cys667, Cys672, Cys675, Cys692, and Cys695.

Self-assembles through coiled coil domains to drive ELVA (endo-lysosomal vesicular assembly) formation. Interacts with BMX. May interact with SSB. Interacts with RAB4 and RAB5 that have been activated by GTP-binding. Interacts WITH RAB14 and RAB4B (GTP-bound form); the interactions allow endosomal tethering and fusion. Interacts with ARL8B (GTP-bound form); the interaction is required for RUFY1 endosomal location and promotes interaction with RAB14. Post-translationally, phosphorylation on Tyr-389 and/or Tyr-400 is required for interaction with BMX and endosomal targeting. Broadly expressed, with highest levels in lung, testis, kidney and brain.

It is found in the early endosome membrane. Its function is as follows. Activating adapter involved in cargo sorting from early/recycling endosomes. Regulates retrieval of proteins from endosomes to the trans-Golgi network through interaction with the dynein-dynactin complex. Dual effector of RAB4B and RAB14, mediates a cooperative interaction allowing endosomal tethering and fusion. Binds phospholipid vesicles containing phosphatidylinositol 3-phosphate and participates in early endosomal trafficking. In oocytes, self-assembles to form a protein matrix which hold together endolysosomes, autophagosomes and proteasomes and generate non-membrane-bound compartments called endo-lysosomal vesicular assemblies (ELVAs). In immature oocytes, ELVAs sequester ubiquitinated protein aggregates and degrade them upon oocyte maturation. The protein is RUN and FYVE domain-containing protein 1 of Homo sapiens (Human).